Consider the following 475-residue polypeptide: NADP-dependent glyceraldehyde-3-phosphate dehydrogenase (475 aa).

Residue Arg103 coordinates substrate. Ser151 provides a ligand contact to NADP(+). 154 to 155 (NY) lines the substrate pocket. NADP(+) contacts are provided by residues Lys177, Thr180, Asp215, and 230 to 251 (GSTG…MLEL). Catalysis depends on residues Glu250 and Cys284. Residue 283 to 285 (RCT) participates in substrate binding. Glu377 contacts NADP(+). Arg437 is a binding site for substrate.

It belongs to the aldehyde dehydrogenase family. As to quaternary structure, homotetramer.

The catalysed reaction is D-glyceraldehyde 3-phosphate + NADP(+) + H2O = (2R)-3-phosphoglycerate + NADPH + 2 H(+). This chain is NADP-dependent glyceraldehyde-3-phosphate dehydrogenase (gapN), found in Streptococcus mutans serotype c (strain ATCC 700610 / UA159).